We begin with the raw amino-acid sequence, 767 residues long: DNA topoisomerase 1 (767 aa).

Over residues 1–23 the composition is skewed to basic and acidic residues; that stretch reads MSGDHLHNDSQIEADFRLNDSHK. A disordered region spans residues 1-201; sequence MSGDHLHNDS…NKKKKPKKEE (201 aa). The residue at position 2 (S2) is an N-acetylserine. A phosphoserine mark is found at S2 and S10. Residues 24 to 39 show a composition bias toward basic residues; the sequence is HKDKHKDREHRHKEHK. Over residues 40–110 the composition is skewed to basic and acidic residues; it reads KDKEKDREKS…DAKIKKEKEN (71 aa). S59 carries the post-translational modification Phosphoserine. K103 participates in a covalent cross-link: Glycyl lysine isopeptide (Lys-Gly) (interchain with G-Cter in SUMO2). A Glycyl lysine isopeptide (Lys-Gly) (interchain with G-Cter in SUMO); alternate cross-link involves residue K105. Residue K105 forms a Glycyl lysine isopeptide (Lys-Gly) (interchain with G-Cter in SUMO2); alternate linkage. S114 carries the phosphoserine modification. Residue K119 forms a Glycyl lysine isopeptide (Lys-Gly) (interchain with G-Cter in SUMO); alternate linkage. A Glycyl lysine isopeptide (Lys-Gly) (interchain with G-Cter in SUMO2); alternate cross-link involves residue K119. K119 participates in a covalent cross-link: Glycyl lysine isopeptide (Lys-Gly) (interchain with G-Cter in SUMO1); alternate. Over residues 131–168 the composition is skewed to basic and acidic residues; sequence PKEDIKPLKRPRDEDDADYKPKKIKTEDIKKEKKRKLE. Glycyl lysine isopeptide (Lys-Gly) (interchain with G-Cter in SUMO2) cross-links involve residues K136 and K150. K155 is covalently cross-linked (Glycyl lysine isopeptide (Lys-Gly) (interchain with G-Cter in SUMO); alternate). K155 is covalently cross-linked (Glycyl lysine isopeptide (Lys-Gly) (interchain with G-Cter in SUMO2); alternate). Residues K160 and K166 each participate in a glycyl lysine isopeptide (Lys-Gly) (interchain with G-Cter in SUMO2) cross-link. K174 participates in a covalent cross-link: Glycyl lysine isopeptide (Lys-Gly) (interchain with G-Cter in SUMO2); alternate. N6-acetyllysine; alternate is present on K174. Basic and acidic residues predominate over residues 181 to 201; the sequence is KDKDKKVPEPDNKKKKPKKEE. K206 is covalently cross-linked (Glycyl lysine isopeptide (Lys-Gly) (interchain with G-Cter in SUMO2)). K282 is subject to N6-acetyllysine. K338 is covalently cross-linked (Glycyl lysine isopeptide (Lys-Gly) (interchain with G-Cter in SUMO2)). Interaction with DNA stretches follow at residues 427-428 and 490-495; these read KY and RAGNEK. Positions 434–767 constitute a Topo IB-type catalytic domain; the sequence is SSRIKGEKDW…IDMADEDYEF (334 aa). S508 is subject to Phosphoserine; by CK2. K551 is covalently cross-linked (Glycyl lysine isopeptide (Lys-Gly) (interchain with G-Cter in SUMO2)). The tract at residues 587-589 is interaction with DNA; that stretch reads TAK. Residues K644, K702, and K714 each participate in a glycyl lysine isopeptide (Lys-Gly) (interchain with G-Cter in SUMO2) cross-link. Y725 acts as the O-(3'-phospho-DNA)-tyrosine intermediate in catalysis.

The protein belongs to the type IB topoisomerase family. In terms of assembly, monomer. Interacts with ERCC6. Interacts with TPRN; TPRN interacts with a number of DNA damage response proteins, is recruited to sites of DNA damage and may play a role in DNA damage repair. Post-translationally, sumoylated. Lys-119 is the main site of sumoylation. Sumoylation plays a role in partitioning TOP1 between nucleoli and nucleoplasm. Levels are dramatically increased on camptothecin (CPT) treatment. In terms of processing, phosphorylation at Ser-508 by CK2 increases binding to supercoiled DNA and sensitivity to camptothecin.

The protein resides in the nucleus. Its subcellular location is the nucleolus. It localises to the nucleoplasm. It catalyses the reaction ATP-independent breakage of single-stranded DNA, followed by passage and rejoining.. Specifically inhibited by camptothecin (CPT), a plant alkaloid with antitumor activity. Functionally, releases the supercoiling and torsional tension of DNA introduced during the DNA replication and transcription by transiently cleaving and rejoining one strand of the DNA duplex. Introduces a single-strand break via transesterification at a target site in duplex DNA. The scissile phosphodiester is attacked by the catalytic tyrosine of the enzyme, resulting in the formation of a DNA-(3'-phosphotyrosyl)-enzyme intermediate and the expulsion of a 5'-OH DNA strand. The free DNA strand then rotates around the intact phosphodiester bond on the opposing strand, thus removing DNA supercoils. Finally, in the religation step, the DNA 5'-OH attacks the covalent intermediate to expel the active-site tyrosine and restore the DNA phosphodiester backbone. Regulates the alternative splicing of tissue factor (F3) pre-mRNA in endothelial cells. Involved in the circadian transcription of the core circadian clock component BMAL1 by altering the chromatin structure around the ROR response elements (ROREs) on the BMAL1 promoter. In Chlorocebus aethiops (Green monkey), this protein is DNA topoisomerase 1 (TOP1).